Reading from the N-terminus, the 172-residue chain is Cell division protein SepF (172 aa).

A disordered region spans residues 16-78 (DGDEHYEPQP…RAASNRDDSS (63 aa)). The span at 17–48 (GDEHYEPQPEGKQTRPAQKNEEYVDQEIRHTE) shows a compositional bias: basic and acidic residues.

This sequence belongs to the SepF family. In terms of assembly, homodimer. Interacts with FtsZ.

It localises to the cytoplasm. Cell division protein that is part of the divisome complex and is recruited early to the Z-ring. Probably stimulates Z-ring formation, perhaps through the cross-linking of FtsZ protofilaments. Its function overlaps with FtsA. The polypeptide is Cell division protein SepF (Renibacterium salmoninarum (strain ATCC 33209 / DSM 20767 / JCM 11484 / NBRC 15589 / NCIMB 2235)).